The following is a 250-amino-acid chain: Ubiquinone/menaquinone biosynthesis C-methyltransferase UbiE (250 aa).

S-adenosyl-L-methionine-binding positions include Ser73, Asp94, and 122–123 (NA).

This sequence belongs to the class I-like SAM-binding methyltransferase superfamily. MenG/UbiE family.

It catalyses the reaction a 2-demethylmenaquinol + S-adenosyl-L-methionine = a menaquinol + S-adenosyl-L-homocysteine + H(+). The catalysed reaction is a 2-methoxy-6-(all-trans-polyprenyl)benzene-1,4-diol + S-adenosyl-L-methionine = a 5-methoxy-2-methyl-3-(all-trans-polyprenyl)benzene-1,4-diol + S-adenosyl-L-homocysteine + H(+). The protein operates within quinol/quinone metabolism; menaquinone biosynthesis; menaquinol from 1,4-dihydroxy-2-naphthoate: step 2/2. It participates in cofactor biosynthesis; ubiquinone biosynthesis. Its function is as follows. Methyltransferase required for the conversion of demethylmenaquinol (DMKH2) to menaquinol (MKH2) and the conversion of 2-polyprenyl-6-methoxy-1,4-benzoquinol (DDMQH2) to 2-polyprenyl-3-methyl-6-methoxy-1,4-benzoquinol (DMQH2). In Legionella pneumophila (strain Paris), this protein is Ubiquinone/menaquinone biosynthesis C-methyltransferase UbiE.